Consider the following 146-residue polypeptide: Large ribosomal subunit protein uL15 (146 aa).

Residues 1–13 (MKLHELKPAEGSR) are compositionally biased toward basic and acidic residues. Positions 1–51 (MKLHELKPAEGSRKVRNRVGRGIGSGNGKTAGRGHKGQNARSGGGVRLGFE) are disordered. Composition is skewed to gly residues over residues 21 to 31 (RGIGSGNGKTA) and 42 to 51 (SGGGVRLGFE).

The protein belongs to the universal ribosomal protein uL15 family. In terms of assembly, part of the 50S ribosomal subunit.

Its function is as follows. Binds to the 23S rRNA. This is Large ribosomal subunit protein uL15 from Bacillus mycoides (strain KBAB4) (Bacillus weihenstephanensis).